A 126-amino-acid polypeptide reads, in one-letter code: Adrenocorticotropic hormone receptor (126 aa).

The chain crosses the membrane as a helical span at residues 1-25 (VLPEEIFFTISIVGVLENLIVLLAV). Over 26-34 (FKNKNLQAP) the chain is Cytoplasmic. The helical transmembrane segment at 35–55 (MYFFICSLAISDMLGSLYKIL) threads the bilayer. Topologically, residues 56-80 (ENILIILRNMGYLKPRGSFETTADD) are extracellular. Residues 81–102 (IIDSLFVLSLLGAIFSLSVIAA) form a helical membrane-spanning segment. Topologically, residues 103–123 (DRYITIFHALRYHSIVTMRRT) are cytoplasmic. A helical transmembrane segment spans residues 124–126 (VVV).

This sequence belongs to the G-protein coupled receptor 1 family. In terms of assembly, interacts with MRAP; increasing ligand-sensitivity and generation of cAMP. Interacts with MRAP2; competing with MRAP for binding to MC2R and impairing the binding of corticotropin (ACTH).

The protein resides in the cell membrane. Functionally, receptor for corticotropin (ACTH). This receptor is mediated by G proteins (G(s)) which activate adenylate cyclase (cAMP). The chain is Adrenocorticotropic hormone receptor (MC2R) from Papio hamadryas (Hamadryas baboon).